The sequence spans 417 residues: Serine hydroxymethyltransferase (417 aa).

Residues L112 and 116–118 each bind (6S)-5,6,7,8-tetrahydrofolate; that span reads GHL. N6-(pyridoxal phosphate)lysine is present on K221. Position 247 (E247) interacts with (6S)-5,6,7,8-tetrahydrofolate.

This sequence belongs to the SHMT family. Homodimer. The cofactor is pyridoxal 5'-phosphate.

It localises to the cytoplasm. It carries out the reaction (6R)-5,10-methylene-5,6,7,8-tetrahydrofolate + glycine + H2O = (6S)-5,6,7,8-tetrahydrofolate + L-serine. Its pathway is one-carbon metabolism; tetrahydrofolate interconversion. The protein operates within amino-acid biosynthesis; glycine biosynthesis; glycine from L-serine: step 1/1. Its function is as follows. Catalyzes the reversible interconversion of serine and glycine with tetrahydrofolate (THF) serving as the one-carbon carrier. This reaction serves as the major source of one-carbon groups required for the biosynthesis of purines, thymidylate, methionine, and other important biomolecules. Also exhibits THF-independent aldolase activity toward beta-hydroxyamino acids, producing glycine and aldehydes, via a retro-aldol mechanism. This is Serine hydroxymethyltransferase from Borrelia recurrentis (strain A1).